The following is a 357-amino-acid chain: DNA integrity scanning protein DisA (357 aa).

The region spanning 3 to 141 (RPTLRETVAR…GGERHVVADS (139 aa)) is the DAC domain. ATP-binding positions include glycine 70, leucine 88, and 101-105 (TRHRS).

It belongs to the DisA family. Homooctamer. The cofactor is Mg(2+).

It carries out the reaction 2 ATP = 3',3'-c-di-AMP + 2 diphosphate. In terms of biological role, participates in a DNA-damage check-point. DisA forms globular foci that rapidly scan along the chromosomes searching for lesions. Functionally, also has diadenylate cyclase activity, catalyzing the condensation of 2 ATP molecules into cyclic di-AMP (c-di-AMP). c-di-AMP likely acts as a signaling molecule that may couple DNA integrity with a cellular process. The chain is DNA integrity scanning protein DisA from Mycobacterium avium (strain 104).